Consider the following 108-residue polypeptide: Trp operon repressor homolog (108 aa).

The DNA-binding element occupies 59-82 (QRQISQLLGVGVATITRGSNELKS).

This sequence belongs to the TrpR family. As to quaternary structure, homodimer.

The protein localises to the cytoplasm. Functionally, this protein is an aporepressor. When complexed with L-tryptophan it binds the operator region of the trp operon and prevents the initiation of transcription. This chain is Trp operon repressor homolog, found in Aliivibrio fischeri (strain MJ11) (Vibrio fischeri).